The sequence spans 542 residues: MARYVFITGGVVSSLGKGIAAAALAALLQARGYRVRLRKLDPYLNVDPGTMSPYQHGEVFVTDDGAETDLDLGHYERFTGRSANSQDNITTGRIYRNIIERERRGDYLGATVQVIPHVTDEIKRFITTGNEEFDFVLCEIGGTVGDIEAMPFLEAIRQLGNELSRQNVIYIHLTLMPFIPSAGELKTKPTQHSVKELQSVGISPDILLVRADRSIPETERCKLSLFCNVRANAVIQALDMPTIYDVPMAYHKEGLDSEVLCAFGIDSAPPPQMDLWEDITHRIHHPEGEVTIAVVGKYTGLKDAYKSLIEAIAHGGLANKVKVNIEWIDSQLFEKENSVLALQKAHGILVPGAFGARGAEGKIRAIQFARERKIPFLGICFGMQLACIEAARNIAQIENASSSEFCETENPIVGLMTEWLKGDVLEKRTRNGDLGGSMRLGAFAAELKEESHIAKIYGMTKIVERHRHRYEVNIDYKDKLEQCGLIFSGMSPDGVLPETIEYVDHPWFIGVQYHPELKSRPFDPHPLFSSFIEAAVEQSRLV.

Positions 1–265 are amidoligase domain; sequence MARYVFITGG…DSEVLCAFGI (265 aa). S13 is a binding site for CTP. S13 contacts UTP. Residue 14–19 participates in ATP binding; that stretch reads SLGKGI. Residue Y54 participates in L-glutamine binding. D71 is an ATP binding site. 2 residues coordinate Mg(2+): D71 and E139. CTP-binding positions include 146-148, 186-191, and K222; these read DIE and KTKPTQ. Residues 186-191 and K222 contribute to the UTP site; that span reads KTKPTQ. In terms of domain architecture, Glutamine amidotransferase type-1 spans 291 to 541; the sequence is TIAVVGKYTG…IEAAVEQSRL (251 aa). An L-glutamine-binding site is contributed by A353. C380 (nucleophile; for glutamine hydrolysis) is an active-site residue. Residues 381–384, E404, and R469 each bind L-glutamine; that span reads FGMQ. Residues H514 and E516 contribute to the active site.

Belongs to the CTP synthase family. As to quaternary structure, homotetramer.

It catalyses the reaction UTP + L-glutamine + ATP + H2O = CTP + L-glutamate + ADP + phosphate + 2 H(+). The enzyme catalyses L-glutamine + H2O = L-glutamate + NH4(+). The catalysed reaction is UTP + NH4(+) + ATP = CTP + ADP + phosphate + 2 H(+). It participates in pyrimidine metabolism; CTP biosynthesis via de novo pathway; CTP from UDP: step 2/2. Allosterically activated by GTP, when glutamine is the substrate; GTP has no effect on the reaction when ammonia is the substrate. The allosteric effector GTP functions by stabilizing the protein conformation that binds the tetrahedral intermediate(s) formed during glutamine hydrolysis. Inhibited by the product CTP, via allosteric rather than competitive inhibition. Catalyzes the ATP-dependent amination of UTP to CTP with either L-glutamine or ammonia as the source of nitrogen. Regulates intracellular CTP levels through interactions with the four ribonucleotide triphosphates. The polypeptide is CTP synthase (Bartonella tribocorum (strain CIP 105476 / IBS 506)).